Here is a 126-residue protein sequence, read N- to C-terminus: MARITTEDCSKVIPDRFQLVIYATRYAKLLNYKVETNQSKKEKRDKPPVIALRRIASGKVSVAQLEQDFINSLRTRSRIEPIVEQDESEDLEEKFEYLPEVYIGEDYSDLDDQIFTEETGEDFEDK.

The protein belongs to the RNA polymerase subunit omega family. In terms of assembly, the RNAP catalytic core consists of 2 alpha, 1 beta, 1 beta' and 1 omega subunit. When a sigma factor is associated with the core the holoenzyme is formed, which can initiate transcription.

It catalyses the reaction RNA(n) + a ribonucleoside 5'-triphosphate = RNA(n+1) + diphosphate. In terms of biological role, promotes RNA polymerase assembly. Latches the N- and C-terminal regions of the beta' subunit thereby facilitating its interaction with the beta and alpha subunits. This Rickettsia bellii (strain OSU 85-389) protein is DNA-directed RNA polymerase subunit omega.